The following is a 228-amino-acid chain: Probable calcium-binding protein CML48 (228 aa).

EF-hand domains follow at residues 52–87 (ETHPEIVRSFESADRNRSGFLEESELRQALSLSGYD) and 121–156 (NCLAQWRAIFNRYDRDRSGKMNSTQLRDAFYNLGCV). Asp-65, Asn-67, Ser-69, and Glu-76 together coordinate Ca(2+).

Its function is as follows. Potential calcium sensor. The sequence is that of Probable calcium-binding protein CML48 (CML48) from Arabidopsis thaliana (Mouse-ear cress).